Here is a 599-residue protein sequence, read N- to C-terminus: NADH-quinone oxidoreductase subunit C/D (599 aa).

An NADH dehydrogenase I subunit C region spans residues 1 to 190; sequence MMIDQIAQES…DPFELTRQKE (190 aa). The NADH dehydrogenase I subunit D stretch occupies residues 214–599; it reads DFMFLNLGPN…IDFVMSDVDR (386 aa).

The protein in the N-terminal section; belongs to the complex I 30 kDa subunit family. It in the C-terminal section; belongs to the complex I 49 kDa subunit family. In terms of assembly, NDH-1 is composed of 13 different subunits. Subunits NuoB, CD, E, F, and G constitute the peripheral sector of the complex.

It localises to the cell inner membrane. It carries out the reaction a quinone + NADH + 5 H(+)(in) = a quinol + NAD(+) + 4 H(+)(out). Its function is as follows. NDH-1 shuttles electrons from NADH, via FMN and iron-sulfur (Fe-S) centers, to quinones in the respiratory chain. The immediate electron acceptor for the enzyme in this species is believed to be ubiquinone. Couples the redox reaction to proton translocation (for every two electrons transferred, four hydrogen ions are translocated across the cytoplasmic membrane), and thus conserves the redox energy in a proton gradient. The sequence is that of NADH-quinone oxidoreductase subunit C/D from Photorhabdus laumondii subsp. laumondii (strain DSM 15139 / CIP 105565 / TT01) (Photorhabdus luminescens subsp. laumondii).